Reading from the N-terminus, the 585-residue chain is YTH domain-containing family protein 3 (585 aa).

Disordered stretches follow at residues methionine 1–methionine 52, arginine 243–glycine 277, and proline 304–glutamine 351. Serine 2 carries the post-translational modification N-acetylserine. Over residues asparagine 15–isoleucine 24 the composition is skewed to polar residues. Serine 23 is subject to Phosphoserine. The segment covering lysine 244–proline 254 has biased composition (basic residues). Positions glutamine 329–glutamine 351 are enriched in low complexity. Positions glycine 416–isoleucine 550 constitute a YTH domain. Residues lysine 422–tyrosine 424, aspartate 428, tryptophan 438–cysteine 439, asparagine 468, tryptophan 492, and tryptophan 497 contribute to the RNA site.

Belongs to the YTHDF family. YTHDF3 subfamily. As to quaternary structure, interacts with CNOT1; promoting recruitment of the CCR4-NOT complex. Interacts with YTHDF1. Interacts with YTHDF2. Interacts with PAN3. In terms of processing, (Microbial infection) Proteolytically cleaved by HIV-1 protease when incorporated into HIV-1 particles in a nucleocapsid-dependent-manner. Cleavage by HIV-1 protease probably ensures optimal infectivity of the mature virion.

It is found in the cytoplasm. The protein localises to the cytosol. The protein resides in the P-body. It localises to the stress granule. Its function is as follows. Specifically recognizes and binds N6-methyladenosine (m6A)-containing RNAs, and regulates their stability. M6A is a modification present at internal sites of mRNAs and some non-coding RNAs and plays a role in mRNA stability and processing. Acts as a regulator of mRNA stability by promoting degradation of m6A-containing mRNAs via interaction with the CCR4-NOT complex or PAN3. The YTHDF paralogs (YTHDF1, YTHDF2 and YTHDF3) share m6A-containing mRNAs targets and act redundantly to mediate mRNA degradation and cellular differentiation. Acts as a negative regulator of type I interferon response by down-regulating interferon-stimulated genes (ISGs) expression: acts by binding to FOXO3 mRNAs. Binds to FOXO3 mRNAs independently of METTL3-mediated m6A modification. Can also act as a regulator of mRNA stability in cooperation with YTHDF2 by binding to m6A-containing mRNA and promoting their degradation. Recognizes and binds m6A-containing circular RNAs (circRNAs); circRNAs are generated through back-splicing of pre-mRNAs, a non-canonical splicing process promoted by dsRNA structures across circularizing exons. Promotes formation of phase-separated membraneless compartments, such as P-bodies or stress granules, by undergoing liquid-liquid phase separation upon binding to mRNAs containing multiple m6A-modified residues: polymethylated mRNAs act as a multivalent scaffold for the binding of YTHDF proteins, juxtaposing their disordered regions and thereby leading to phase separation. The resulting mRNA-YTHDF complexes then partition into different endogenous phase-separated membraneless compartments, such as P-bodies, stress granules or neuronal RNA granules. May also recognize and bind N1-methyladenosine (m1A)-containing mRNAs: inhibits trophoblast invasion by binding to m1A-methylated transcripts of IGF1R, promoting their degradation. In terms of biological role, has some antiviral activity against HIV-1 virus: incorporated into HIV-1 particles in a nucleocapsid-dependent manner and reduces viral infectivity in the next cycle of infection. May interfere with this early step of the viral life cycle by binding to N6-methyladenosine (m6A) modified sites on the HIV-1 RNA genome. The chain is YTH domain-containing family protein 3 from Homo sapiens (Human).